The following is a 274-amino-acid chain: NH(3)-dependent NAD(+) synthetase (274 aa).

An ATP-binding site is contributed by 46–53 (GISGGQDS). Aspartate 52 provides a ligand contact to Mg(2+). Deamido-NAD(+) is bound at residue arginine 140. Threonine 160 lines the ATP pocket. Glutamate 165 contributes to the Mg(2+) binding site. Deamido-NAD(+)-binding residues include lysine 173 and aspartate 180. Residues lysine 189 and threonine 211 each contribute to the ATP site. 260–261 (HK) is a deamido-NAD(+) binding site.

This sequence belongs to the NAD synthetase family. As to quaternary structure, homodimer.

It carries out the reaction deamido-NAD(+) + NH4(+) + ATP = AMP + diphosphate + NAD(+) + H(+). Its pathway is cofactor biosynthesis; NAD(+) biosynthesis; NAD(+) from deamido-NAD(+) (ammonia route): step 1/1. In terms of biological role, catalyzes the ATP-dependent amidation of deamido-NAD to form NAD. Uses ammonia as a nitrogen source. This Streptococcus pneumoniae serotype 19F (strain G54) protein is NH(3)-dependent NAD(+) synthetase.